The sequence spans 749 residues: MTIRSPEPEVKILVDIDPVPTSFERWAKPGHFARSLAKGPSTTTWIWDLHADAHDFDSHTSDLEEISRKVFSAHFGQLAVIFIWLSGMYFHGARFSNYEAWLSDPTHIKPSAQVVWPIVGQEILNGDVGGGFQGIQITSGFFQIWRAAGVTSELQLYATAIGGLVMATLMLIAGWFHYHKAAPKLAWFQDVESMLNHHLAGLLGLGSLSWAGHQIHVSLPINQLLDAGVDPKEIPLPHEFLLNRDLLAQLYPSFSKGLTPFFSLNWSEYSDFLTFRGGLNPVTGGLWLTDTAHHHLAIAVLFIVAGHMYRTNWGIGHSLREILEAHKGPFTGEGHKGLYEILTTSWHAQLAINLATLGSLTIIVAHHMYSMPPYPYLATDYGTQLSLFTHHMWIGGFCVVGAGAHAAIFLVRDYDPTTQYNNLLDRVLRHRDAIISHLNWVCIFLGFHSFGLYIHNDTMSALGRPQDMFSDTAIQLQPVFAQWIQNTHAAAPGFTAPNAAAATSLTWGGSDLVAVGGKVAMMPIPLGTADFLVHHIHAFTIHVTVLILLKGVLFSRSSRLIPDKANLGFRFPCDGPGRGGTCQVSAWDHVFLGLFWMYNAISVVIFHFSWKMQSDVWGSVTAKGVSHITGGNFAQSATTINGWLRDFLWAQASQVIQSYGSSLSAYGLVFLGAHFIWAFSLMFLFSGRGYWQELIESIVWAHNKLKVAPAIQPRALSIIQGRAVGVAHYLLGGIATTWAFFLARIIAVG.

8 consecutive transmembrane segments (helical) span residues 70–93, 156–179, 195–219, 291–309, 346–369, 385–411, 433–455, and 531–549; these read VFSA…FHGA, LYAT…FHYH, LNHH…HVSL, TAHH…GHMY, WHAQ…HHMY, LSLF…IFLV, AIIS…LYIH, and FLVH…LILL. The [4Fe-4S] cluster site is built by C573 and C582. Helical transmembrane passes span 589-610 and 663-685; these read HVFL…HFSW and LSAY…MFLF. H674 serves as a coordination point for chlorophyll a'. Chlorophyll a is bound by residues M682 and Y690. W691 serves as a coordination point for phylloquinone. A helical transmembrane segment spans residues 723-743; the sequence is AVGVAHYLLGGIATTWAFFLA.

It belongs to the PsaA/PsaB family. In terms of assembly, the PsaA/B heterodimer binds the P700 chlorophyll special pair and subsequent electron acceptors. PSI consists of a core antenna complex that captures photons, and an electron transfer chain that converts photonic excitation into a charge separation. The eukaryotic PSI reaction center is composed of at least 11 subunits. P700 is a chlorophyll a/chlorophyll a' dimer, A0 is one or more chlorophyll a, A1 is one or both phylloquinones and FX is a shared 4Fe-4S iron-sulfur center. is required as a cofactor.

Its subcellular location is the plastid. It localises to the chloroplast thylakoid membrane. It catalyses the reaction reduced [plastocyanin] + hnu + oxidized [2Fe-2S]-[ferredoxin] = oxidized [plastocyanin] + reduced [2Fe-2S]-[ferredoxin]. In terms of biological role, psaA and PsaB bind P700, the primary electron donor of photosystem I (PSI), as well as the electron acceptors A0, A1 and FX. PSI is a plastocyanin-ferredoxin oxidoreductase, converting photonic excitation into a charge separation, which transfers an electron from the donor P700 chlorophyll pair to the spectroscopically characterized acceptors A0, A1, FX, FA and FB in turn. Oxidized P700 is reduced on the lumenal side of the thylakoid membrane by plastocyanin. This chain is Photosystem I P700 chlorophyll a apoprotein A1, found in Zygnema circumcarinatum (Green alga).